The chain runs to 223 residues: GTP-binding nuclear protein Ran (223 aa).

Residues 8–172 (VVAEFKLVLV…LWILRKLTGD (165 aa)) form the Small GTPase Ran-type domain. 19-26 (DGGVGKTT) is a GTP binding site. The segment at 38-46 (KRYIATQGV) is switch-I. GTP is bound by residues G69, 123 to 126 (NKVD), and 151 to 153 (SAK). Residues 69 to 85 (GQEKLGGLREGYYIGAD) form a switch-II region.

The protein belongs to the small GTPase superfamily. Ran family. As to quaternary structure, monomer. Found in a nuclear export complex with RanGTP, exportin and pre-miRNA.

The protein resides in the nucleus. GTP-binding protein involved in nucleocytoplasmic transport. Required for the import of protein into the nucleus and also for RNA export. Involved in chromatin condensation and control of cell cycle. The polypeptide is GTP-binding nuclear protein Ran (Tetrahymena pyriformis).